We begin with the raw amino-acid sequence, 1610 residues long: E3 ubiquitin-protein ligase listerin (1610 aa).

Positions 1–10 (MKKKSTDLYG) are enriched in basic and acidic residues. Residues 1–20 (MKKKSTDLYGRKNPGMQSMS) are disordered. HEAT repeat units lie at residues 110–148 (LKIF…SDRA), 314–351 (VPML…NLIT), 372–408 (IGAM…EVYD), 409–443 (CLLN…RYFK), 590–626 (SPAF…SFDE), 627–664 (LENI…TAVF), 736–773 (KSLY…KALE), 965–1003 (GKMP…VVSN), 1119–1156 (CCFL…MSVV), 1322–1354 (RVYL…HAMD), 1355–1393 (LLRP…YSSA), and 1435–1473 (FTGY…KVNR). Residues 1558–1604 (CAICYSVLSVERTLPNKRCGTCRHKFHASCLYKWFKSSNSSRCPLCR) form an RING-type; atypical zinc finger.

It belongs to the LTN1 family. In terms of assembly, component of the ribosome quality control complex (RQC), composed of the E3 ubiquitin ligase rkr1/ltn1, rqc1 and mtr1/rqc2, as well as cdc48 and its ubiquitin-binding cofactors. RQC forms a stable complex with 60S ribosomal subunits.

The protein resides in the nucleus. It localises to the cytoplasm. The protein localises to the cytosol. The enzyme catalyses S-ubiquitinyl-[E2 ubiquitin-conjugating enzyme]-L-cysteine + [acceptor protein]-L-lysine = [E2 ubiquitin-conjugating enzyme]-L-cysteine + N(6)-ubiquitinyl-[acceptor protein]-L-lysine.. Its pathway is protein modification; protein ubiquitination. Functionally, E3 ubiquitin-protein ligase component of the ribosome quality control complex (RQC), a ribosome-associated complex that mediates ubiquitination and extraction of incompletely synthesized nascent chains for proteasomal degradation. Mediates ubiquitination of proteins derived from mRNAs lacking stop codons (non-stop proteins) and other translation arrest products induced by poly-lysine sequences and tandem rare codons. Ubiquitination leads to cdc48 recruitment for extraction and degradation of the incomplete translation product. May indirectly play a role in chromatin function and transcription. The sequence is that of E3 ubiquitin-protein ligase listerin from Schizosaccharomyces pombe (strain 972 / ATCC 24843) (Fission yeast).